A 237-amino-acid polypeptide reads, in one-letter code: Mitochondrial inner membrane protease atp23 (237 aa).

Residues 1–18 show a composition bias toward polar residues; the sequence is MSTSESSNNGSQPGNQDT. A disordered region spans residues 1 to 24; it reads MSTSESSNNGSQPGNQDTGYIPGD. His136 provides a ligand contact to a divalent metal cation. Glu137 is an active-site residue. Residue His140 coordinates a divalent metal cation.

Belongs to the peptidase M76 family.

The protein resides in the mitochondrion inner membrane. In terms of biological role, has a dual role in the assembly of mitochondrial ATPase. Acts as a protease that removes N-terminal residues of mitochondrial ATPase CF(0) subunit 6 at the intermembrane space side. Also involved in the correct assembly of the membrane-embedded ATPase CF(0) particle, probably mediating association of subunit 6 with the subunit 9 ring. The protein is Mitochondrial inner membrane protease atp23 (atp23) of Aspergillus niger (strain ATCC MYA-4892 / CBS 513.88 / FGSC A1513).